Consider the following 598-residue polypeptide: Nuclear receptor subfamily 4 group A member 2 (598 aa).

Residues 1–22 (MPCVQAQYGSSPQGASPASQSY) form a disordered region. A compositionally biased stretch (low complexity) spans 8-22 (YGSSPQGASPASQSY). The nuclear receptor DNA-binding region spans 260–335 (EGLCAVCGDN…VGMVKEVVRT (76 aa)). 2 NR C4-type zinc fingers span residues 263–283 (CAVC…CEGC) and 299–323 (CLAN…FQKC). The short motif at 287 to 314 (FKRTVQKNAKYVCLANKNCPVDKRRRNR) is the Bipartite nuclear localization signal (NLS1) element. Positions 337–361 (SLKGRRGRLPSKPKSPQDPSPPSPP) are disordered. The short motif at 338-350 (LKGRRGRLPSKPK) is the Nuclear localization signal (NLS1) element. Positions 352-361 (PQDPSPPSPP) are enriched in pro residues. Residues 360–595 (PPVSLISALV…AIIDKLFLDT (236 aa)) enclose the NR LBD domain. The short motif at 443–452 (FLELFVLRLA) is the nuclear export sequence (NES1) element. Positions 568–577 (QGLQRIFYLK) match the nuclear export sequence (NES2) motif.

The protein belongs to the nuclear hormone receptor family. NR4 subfamily. As to quaternary structure, interacts with SFPQ, NCOR2, SIN3A and HADC1. The interaction with NCOR2 increases in the absence of PITX3. Interacts with PER2. Brain.

It localises to the cytoplasm. Its subcellular location is the nucleus. Its function is as follows. Transcriptional regulator which is important for the differentiation and maintenance of meso-diencephalic dopaminergic (mdDA) neurons during development. It is crucial for expression of a set of genes such as SLC6A3, SLC18A2, TH and DRD2 which are essential for development of mdDA neurons. The chain is Nuclear receptor subfamily 4 group A member 2 (Nr4a2) from Mus musculus (Mouse).